Reading from the N-terminus, the 318-residue chain is Endochitinase 1 (318 aa).

A signal peptide spans 1 to 18 (EFTTLFLLFSVLLLSASA). The Chitin-binding type-1 domain occupies 19 to 60 (EQCGSQAGGALCASGLCCSKFGWCGDTNDYCGPGNCQSQCPG). 7 cysteine pairs are disulfide-bonded: Cys-21–Cys-36, Cys-30–Cys-42, Cys-35–Cys-49, Cys-54–Cys-58, Cys-89–Cys-152, Cys-164–Cys-172, and Cys-271–Cys-303. Glu-134 acts as the Proton donor in catalysis. A propeptide spans 312–318 (GLLVDTM) (removed in mature form, vacuolar targeting).

Belongs to the glycosyl hydrolase 19 family. Chitinase class I subfamily.

It is found in the vacuole. The catalysed reaction is Random endo-hydrolysis of N-acetyl-beta-D-glucosaminide (1-&gt;4)-beta-linkages in chitin and chitodextrins.. Defense against chitin-containing fungal pathogens. This Solanum tuberosum (Potato) protein is Endochitinase 1 (CHTB1).